A 426-amino-acid polypeptide reads, in one-letter code: L-cysteine:1D-myo-inositol 2-amino-2-deoxy-alpha-D-glucopyranoside ligase (426 aa).

C45 serves as a coordination point for Zn(2+). L-cysteinyl-5'-AMP is bound by residues 45-48, T60, and 83-85; these read CGIT and NVT. Residues 47–57 carry the 'HIGH' region motif; sequence ITPYDATHIGH. Residues 199–204 carry the 'ERGGDP' region motif; it reads ERGGDP. W239 contributes to the L-cysteinyl-5'-AMP binding site. C243 lines the Zn(2+) pocket. 261–263 is a binding site for L-cysteinyl-5'-AMP; the sequence is GSD. Residue H268 participates in Zn(2+) binding. V294 contributes to the L-cysteinyl-5'-AMP binding site. The 'KMSKS' region motif lies at 300–304; that stretch reads KMSKS.

The protein belongs to the class-I aminoacyl-tRNA synthetase family. MshC subfamily. As to quaternary structure, monomer. It depends on Zn(2+) as a cofactor.

The enzyme catalyses 1D-myo-inositol 2-amino-2-deoxy-alpha-D-glucopyranoside + L-cysteine + ATP = 1D-myo-inositol 2-(L-cysteinylamino)-2-deoxy-alpha-D-glucopyranoside + AMP + diphosphate + H(+). Functionally, catalyzes the ATP-dependent condensation of GlcN-Ins and L-cysteine to form L-Cys-GlcN-Ins. The chain is L-cysteine:1D-myo-inositol 2-amino-2-deoxy-alpha-D-glucopyranoside ligase from Clavibacter michiganensis subsp. michiganensis (strain NCPPB 382).